A 160-amino-acid polypeptide reads, in one-letter code: Cyclic pyranopterin monophosphate synthase (160 aa).

Residues 75–77 and 113–114 contribute to the substrate site; these read LCH and ME. Asp-128 is a catalytic residue.

This sequence belongs to the MoaC family. Homohexamer; trimer of dimers.

The enzyme catalyses (8S)-3',8-cyclo-7,8-dihydroguanosine 5'-triphosphate = cyclic pyranopterin phosphate + diphosphate. The protein operates within cofactor biosynthesis; molybdopterin biosynthesis. Its function is as follows. Catalyzes the conversion of (8S)-3',8-cyclo-7,8-dihydroguanosine 5'-triphosphate to cyclic pyranopterin monophosphate (cPMP). The protein is Cyclic pyranopterin monophosphate synthase of Haemophilus influenzae (strain PittEE).